We begin with the raw amino-acid sequence, 368 residues long: GTPase Obg (368 aa).

Positions 1–161 constitute an Obg domain; sequence MRFVDEATIT…RSLRLELKIL (161 aa). The OBG-type G domain occupies 162 to 337; it reads ADAGLLGLPN…VVAEMWRMRD (176 aa). Residues 168–175, 193–197, 217–220, 290–293, and 318–320 each bind GTP; these read GLPNAGKS, FTTLI, DIPG, NKID, and SAL. Mg(2+)-binding residues include serine 175 and threonine 195.

The protein belongs to the TRAFAC class OBG-HflX-like GTPase superfamily. OBG GTPase family. Monomer. It depends on Mg(2+) as a cofactor.

Its subcellular location is the cytoplasm. An essential GTPase which binds GTP, GDP and possibly (p)ppGpp with moderate affinity, with high nucleotide exchange rates and a fairly low GTP hydrolysis rate. Plays a role in control of the cell cycle, stress response, ribosome biogenesis and in those bacteria that undergo differentiation, in morphogenesis control. The sequence is that of GTPase Obg from Nitratidesulfovibrio vulgaris (strain DSM 19637 / Miyazaki F) (Desulfovibrio vulgaris).